The following is a 76-amino-acid chain: Parvalbumin beta 3 (76 aa).

Ala1 bears the N-acetylalanine mark. The EF-hand domain occupies 31–66; sequence KSPEEVKKFFAIIDQDHSGFIEEEELKLFLQTFSAG. 6 residues coordinate Ca(2+): Asp44, Asp46, Ser48, Phe50, Glu52, and Glu55.

The protein belongs to the parvalbumin family.

Functionally, in muscle, parvalbumin is thought to be involved in relaxation after contraction. It binds two calcium ions. This chain is Parvalbumin beta 3, found in Merluccius polylepis (Southern hake).